The primary structure comprises 225 residues: MVTHSKFPAAGMSRPLDTSLRLKTFSSKSEYQLVVNAVRKLQESGFYWSAVTGGEANLLLSAEPAGTFLIRDSSDQRHFFTLSVKTQSGTKNLRIQCEGGSFSLQSDPRSTQPVPRFDCVLKLVHHYMPPPGAPSFPSPPTEPSSEVPEQPSAQPLPGSPPRRAYYIYSGGEKIPLVLSRPLSSNVATLQHLCRKTVNGHLDSYEKVTQLPGPIREFLDQYDAPL.

The tract at residues 22–33 is kinase inhibitory region (KIR); the sequence is LKTFSSKSEYQL. Residues 34-45 form an extended SH2 subdomain (ESS) region; that stretch reads VVNAVRKLQESG. The SH2 domain occupies 46 to 142; that stretch reads FYWSAVTGGE…APSFPSPPTE (97 aa). Residues 131 to 142 are compositionally biased toward pro residues; that stretch reads PGAPSFPSPPTE. The disordered stretch occupies residues 131 to 162; the sequence is PGAPSFPSPPTEPSSEVPEQPSAQPLPGSPPR. The segment covering 143–155 has biased composition (low complexity); that stretch reads PSSEVPEQPSAQP. Residues 177–224 form the SOCS box domain; that stretch reads VLSRPLSSNVATLQHLCRKTVNGHLDSYEKVTQLPGPIREFLDQYDAP.

Interacts with multiple activated proteins of the tyrosine kinase signaling pathway including IGF1 receptor, insulin receptor and JAK2. Binding to JAK2 is mediated through the KIR and SH2 domains to a phosphorylated tyrosine residue within the JAK2 JH1 domain. Binds specific activated tyrosine residues of the leptin, EPO, IL12, GSCF and gp130 receptors. Interaction with CSNK1E stabilizes SOCS3 protein. Component of the probable ECS(SOCS3) E3 ubiquitin-protein ligase complex which contains CUL5, RNF7/RBX2, Elongin BC complex and SOCS3. Interacts with CUL5, RNF7, ELOB and ELOC. Interacts with CUL2. Interacts with FGFR3. Interacts with INSR. Interacts with BCL10; this interaction may interfere with BCL10-binding with PELI2. Interacts with NOD2 (via CARD domain); the interaction promotes NOD2 degradation. In terms of processing, phosphorylated on tyrosine residues after stimulation by the cytokines, IL-2, EPO or IGF1. In terms of tissue distribution, widely expressed with high expression in heart, placenta, skeletal muscle, peripheral blood leukocytes, fetal and adult lung, and fetal liver and kidney. Lower levels in thymus.

The protein operates within protein modification; protein ubiquitination. Functionally, SOCS family proteins form part of a classical negative feedback system that regulates cytokine signal transduction. SOCS3 is involved in negative regulation of cytokines that signal through the JAK/STAT pathway. Inhibits cytokine signal transduction by binding to tyrosine kinase receptors including IL6ST/gp130, LIF, erythropoietin, insulin, IL12, GCSF and leptin receptors. Binding to JAK2 inhibits its kinase activity and regulates IL6 signaling. Suppresses fetal liver erythropoiesis. Regulates onset and maintenance of allergic responses mediated by T-helper type 2 cells. Probable substrate recognition component of a SCF-like ECS (Elongin BC-CUL2/5-SOCS-box protein) E3 ubiquitin-protein ligase complex which mediates the ubiquitination and subsequent proteasomal degradation of target proteins. The sequence is that of Suppressor of cytokine signaling 3 from Homo sapiens (Human).